Consider the following 324-residue polypeptide: Polyketide biosynthesis acyltransferase homolog PksD (324 aa).

Ser99 is a catalytic residue.

It is found in the cytoplasm. It functions in the pathway antibiotic biosynthesis; bacillaene biosynthesis. Functionally, probably involved in some intermediate steps for the synthesis of the antibiotic polyketide bacillaene which is involved in secondary metabolism. This is Polyketide biosynthesis acyltransferase homolog PksD (pksD) from Bacillus subtilis (strain 168).